Here is a 423-residue protein sequence, read N- to C-terminus: Histidine--tRNA ligase 2 (423 aa).

This sequence belongs to the class-II aminoacyl-tRNA synthetase family. In terms of assembly, homodimer.

Its subcellular location is the cytoplasm. It carries out the reaction tRNA(His) + L-histidine + ATP = L-histidyl-tRNA(His) + AMP + diphosphate + H(+). This is Histidine--tRNA ligase 2 from Bacillus cereus (strain ATCC 14579 / DSM 31 / CCUG 7414 / JCM 2152 / NBRC 15305 / NCIMB 9373 / NCTC 2599 / NRRL B-3711).